The following is a 208-amino-acid chain: Protein-L-isoaspartate O-methyltransferase (208 aa).

Ser-59 is a catalytic residue.

The protein belongs to the methyltransferase superfamily. L-isoaspartyl/D-aspartyl protein methyltransferase family.

It localises to the cytoplasm. The enzyme catalyses [protein]-L-isoaspartate + S-adenosyl-L-methionine = [protein]-L-isoaspartate alpha-methyl ester + S-adenosyl-L-homocysteine. Catalyzes the methyl esterification of L-isoaspartyl residues in peptides and proteins that result from spontaneous decomposition of normal L-aspartyl and L-asparaginyl residues. It plays a role in the repair and/or degradation of damaged proteins. The chain is Protein-L-isoaspartate O-methyltransferase from Citrobacter koseri (strain ATCC BAA-895 / CDC 4225-83 / SGSC4696).